Here is a 173-residue protein sequence, read N- to C-terminus: Large ribosomal subunit protein uL10 (173 aa).

Belongs to the universal ribosomal protein uL10 family. As to quaternary structure, part of the ribosomal stalk of the 50S ribosomal subunit. The N-terminus interacts with L11 and the large rRNA to form the base of the stalk. The C-terminus forms an elongated spine to which L12 dimers bind in a sequential fashion forming a multimeric L10(L12)X complex.

Forms part of the ribosomal stalk, playing a central role in the interaction of the ribosome with GTP-bound translation factors. The protein is Large ribosomal subunit protein uL10 of Desulfatibacillum aliphaticivorans.